Here is a 1314-residue protein sequence, read N- to C-terminus: Synergin gamma (1314 aa).

The stretch at 115–155 (MQKQFAEEQQKRFEQQQKLLEEERKRRQFEEQKQKLRLLSS) forms a coiled coil. A disordered region spans residues 178-199 (GFSRDAKMHPTPASHPKKPGPS). The region spanning 295 to 388 (NESLVPDAYK…QFPAAPIPTL (94 aa)) is the EH domain. The DFXDF motif 1 signature appears at 457-461 (DFQDF). The disordered stretch occupies residues 460–498 (DFQDASKSGSLDDSFSDFQELPASSKTSNSQHGNSAPSL). Positions 462–496 (QDASKSGSLDDSFSDFQELPASSKTSNSQHGNSAP) are enriched in polar residues. Serine 473 carries the phosphoserine modification. Lysine 513 carries the N6-acetyllysine modification. The tract at residues 518–786 (KGIAADKSSE…ADFHSSKFSS (269 aa)) is interaction with AP1G1. A Phosphoserine modification is found at serine 580. The tract at residues 666-678 (LADDFGEFSLFGE) is interaction with AP1G1, AP1G2 and GGA1. The short motif at 690 to 694 (DFADF) is the DFXDF motif 2 element. Position 720 is a phosphoserine (serine 720). An N6-acetyllysine modification is found at lysine 744. Phosphoserine occurs at positions 752 and 772. The DFXDF motif 3 signature appears at 775–779 (DFADF). 6 positions are modified to phosphoserine: serine 812, serine 852, serine 855, serine 909, serine 919, and serine 935. 2 disordered regions span residues 972–1026 (PQTS…DFGE) and 1073–1102 (SLSL…NTLN). The span at 976-990 (EQKEYENRDYKDFTK) shows a compositional bias: basic and acidic residues. A compositionally biased stretch (polar residues) spans 1001–1019 (EATCPSPASSGASQETPNE). Residues serine 1006, serine 1073, serine 1075, serine 1087, and serine 1098 each carry the phosphoserine modification. Threonine 1100 carries the phosphothreonine modification.

Self-associates. Interacts with GGA1 (via GAE domain). Interacts with GGA2 and GGA3. Interacts with AP1G1 (via GAE domain), a subunit of adapter protein complex AP-1. Interacts with AP1G2 (via GAE domain) a subunit of adapter protein complex AP-1. Component of the aftiphilin/p200/gamma-synergin complex, at least composed of AFTPH/aftiphilin, HEATR5B/p200a and SYNRG/gamma-synergin, which plays a role in the AP1G1/AP-1-mediated trafficking of transferrin from early to recycling endosomes. Within the complex interacts with AFTPH/aftiphilin and HEATR5B/p200a; the interactions are direct. Interacts (via EH domain) with SCAMP1.

The protein resides in the cytoplasm. The protein localises to the golgi apparatus. Its subcellular location is the trans-Golgi network membrane. It localises to the perinuclear region. It is found in the cytoplasmic vesicle. The protein resides in the clathrin-coated vesicle. Its function is as follows. Plays a role in endocytosis and/or membrane trafficking at the trans-Golgi network (TGN). May act by linking the adapter protein complex AP-1 to other proteins. Component of clathrin-coated vesicles. Component of the aftiphilin/p200/gamma-synergin complex, which plays roles in AP1G1/AP-1-mediated protein trafficking including the trafficking of transferrin from early to recycling endosomes, and the membrane trafficking of furin and the lysosomal enzyme cathepsin D between the trans-Golgi network (TGN) and endosomes. The sequence is that of Synergin gamma from Homo sapiens (Human).